Here is a 602-residue protein sequence, read N- to C-terminus: MTSERQKRVRNFSIIAHIDHGKSTLADRLLEETGTLTQREMDEQTLDTMDLEKERGITIKSQAARLIYKRDDEKEYILNLIDTPGHVDFNYEVSRSLAACEGAILVVDATQGIQAQTLANCYLALEHNLEIVPVINKIDLPSARPEEVKREIEDIIGIDASDAPLISAKTGLNIKDVLEAVVEKVPYPKGEEEEPLKALIFDSYYDAYKGVVCYVRVKEGTIKPGTEIKLMATGRKYEVTETGVFVPEYMKIDGLEAGDVGYITASIKNVRDARVGDTITEAKRPATEALEGYRPAIPMVFSGIYPVDGAKYGELKEALEKLQINDAALSFEPETSIALGFGFRCGFLGLLHMDIIQERIEREFNLDIITTAPSVIYKVTKTNKETIDVTNPTNLPEESEIAYMEEPIVECSIITPSDYVGPIMELCQNRRGVFKDMQYIETTRVVLNYDIPLNEIIYDFFDALKSRSRGYASLDYELKGYTQSKLVKLDILLNGDNVDALSMIVPEERAYSRGRQMAEKLKEIIPRQMFEVPIQAAVGSKVIARETVRALRKDVLAKCYGGDISRKKKLLEKQKEGKKRMRQIGSVEIPQEAFMSVLKTEE.

The tr-type G domain occupies 7-189 (KRVRNFSIIA…AVVEKVPYPK (183 aa)). Residues 19 to 24 (DHGKST) and 136 to 139 (NKID) contribute to the GTP site.

It belongs to the TRAFAC class translation factor GTPase superfamily. Classic translation factor GTPase family. LepA subfamily.

The protein localises to the cell membrane. It catalyses the reaction GTP + H2O = GDP + phosphate + H(+). Required for accurate and efficient protein synthesis under certain stress conditions. May act as a fidelity factor of the translation reaction, by catalyzing a one-codon backward translocation of tRNAs on improperly translocated ribosomes. Back-translocation proceeds from a post-translocation (POST) complex to a pre-translocation (PRE) complex, thus giving elongation factor G a second chance to translocate the tRNAs correctly. Binds to ribosomes in a GTP-dependent manner. The chain is Elongation factor 4 from Clostridium tetani (strain Massachusetts / E88).